Reading from the N-terminus, the 117-residue chain is Large ribosomal subunit protein bL19 (117 aa).

It belongs to the bacterial ribosomal protein bL19 family.

Its function is as follows. This protein is located at the 30S-50S ribosomal subunit interface and may play a role in the structure and function of the aminoacyl-tRNA binding site. The sequence is that of Large ribosomal subunit protein bL19 from Exiguobacterium sibiricum (strain DSM 17290 / CCUG 55495 / CIP 109462 / JCM 13490 / 255-15).